A 168-amino-acid chain; its full sequence is Group IIF secretory phospholipase A2 (168 aa).

A signal peptide spans 1 to 20; sequence MKKFFAIAVLAGSVVTTAHS. 7 disulfide bridges follow: Cys46–Cys138, Cys48–Cys64, Cys63–Cys120, Cys69–Cys145, Cys70–Cys113, Cys79–Cys106, and Cys98–Cys111. 3 residues coordinate Ca(2+): Tyr47, Gly49, and Gly51. His67 is an active-site residue. Residue Asp68 participates in Ca(2+) binding. Asn92 and Asn102 each carry an N-linked (GlcNAc...) asparagine glycan. Residue Asp114 is part of the active site. A required for localization on the plasma membrane region spans residues 139-168; it reads QGPTPNCSIYDPYPEEVTCGHGLPATPVST. The N-linked (GlcNAc...) asparagine glycan is linked to Asn144.

The protein belongs to the phospholipase A2 family. Ca(2+) is required as a cofactor. As to expression, strongly expressed in testis.

The protein resides in the secreted. Its subcellular location is the cell membrane. It catalyses the reaction a 1,2-diacyl-sn-glycero-3-phosphocholine + H2O = a 1-acyl-sn-glycero-3-phosphocholine + a fatty acid + H(+). The enzyme catalyses 1-hexadecanoyl-2-(9Z-octadecenoyl)-sn-glycero-3-phospho-(1'-sn-glycerol) + H2O = 1-hexadecanoyl-sn-glycero-3-phospho-(1'-sn-glycerol) + (9Z)-octadecenoate + H(+). The catalysed reaction is 1-hexadecanoyl-2-(9Z,12Z-octadecadienoyl)-sn-glycero-3-phosphoethanolamine + H2O = 1-hexadecanoyl-sn-glycero-3-phosphoethanolamine + (9Z,12Z)-octadecadienoate + H(+). It carries out the reaction 1-hexadecanoyl-2-(5Z,8Z,11Z,14Z-eicosatetraenoyl)-sn-glycero-3-phosphoethanolamine + H2O = 1-hexadecanoyl-sn-glycero-3-phosphoethanolamine + (5Z,8Z,11Z,14Z)-eicosatetraenoate + H(+). It catalyses the reaction 1-hexadecanoyl-2-(9Z-octadecenoyl)-sn-glycero-3-phosphocholine + H2O = 1-hexadecanoyl-sn-glycero-3-phosphocholine + (9Z)-octadecenoate + H(+). The enzyme catalyses 1-hexadecanoyl-2-(9Z-octadecenoyl)-sn-glycero-3-phospho-L-serine + H2O = 1-hexadecanoyl-sn-glycero-3-phospho-L-serine + (9Z)-octadecenoate + H(+). Secretory calcium-dependent phospholipase A2 that primarily targets extracellular phospholipids. Hydrolyzes the ester bond of the fatty acyl group attached at the sn-2 position of phospholipids (phospholipase A2 activity), the catalytic efficiency decreasing in the following order: phosphatidylglycerols &gt; phosphatidylethanolamines &gt; phosphatidylcholines &gt; phosphatidylserines. May play a role in lipid mediator production in inflammatory conditions, by providing arachidonic acid to downstream cyclooxygenases and lipoxygenases. The chain is Group IIF secretory phospholipase A2 (Pla2g2f) from Mus musculus (Mouse).